Reading from the N-terminus, the 475-residue chain is Cytosolic non-specific dipeptidase (475 aa).

The residue at position 9 (Lys-9) is an N6-acetyllysine. Ser-58 carries the post-translational modification Phosphoserine. Residue His-99 participates in Mn(2+) binding. The active site involves Asp-101. Asp-132 is a binding site for Mn(2+). Glu-166 acts as the Proton acceptor in catalysis. Substrate is bound by residues 166–167 (EE), Asp-195, His-228, Thr-330, Arg-343, Ser-417, and His-445. Mn(2+)-binding residues include Glu-167 and Asp-195. His-445 provides a ligand contact to Mn(2+).

It belongs to the peptidase M20A family. In terms of assembly, homodimer. It depends on Mn(2+) as a cofactor.

It localises to the cytoplasm. The catalysed reaction is Hydrolysis of dipeptides, preferentially hydrophobic dipeptides including prolyl amino acids.. It catalyses the reaction L-threonyl-L-threonine + H2O = 2 L-threonine. It carries out the reaction L-threonyl-L-serine + H2O = L-threonine + L-serine. The enzyme catalyses L-seryl-L-threonine + H2O = L-threonine + L-serine. The catalysed reaction is L-cysteinylglycine + H2O = L-cysteine + glycine. It catalyses the reaction L-alanyl-L-cysteine + H2O = L-cysteine + L-alanine. It carries out the reaction (S)-lactate + L-phenylalanine = N-[(S)-lactoyl]-L-phenylalanine + H2O. Catalyzes the peptide bond hydrolysis in dipeptides, displaying a non-redundant activity toward threonyl dipeptides. Mediates threonyl dipeptide catabolism in a tissue-specific way. Has high dipeptidase activity toward cysteinylglycine, an intermediate metabolite in glutathione metabolism. Metabolizes N-lactoyl-amino acids, both through hydrolysis to form lactic acid and amino acids, as well as through their formation by reverse proteolysis. Plays a role in the regulation of cell cycle arrest and apoptosis. The chain is Cytosolic non-specific dipeptidase (CNDP2) from Bos taurus (Bovine).